The following is a 424-amino-acid chain: Serine hydroxymethyltransferase (424 aa).

(6S)-5,6,7,8-tetrahydrofolate-binding positions include Leu-113 and Gly-117–Leu-119. Lys-222 is modified (N6-(pyridoxal phosphate)lysine). A (6S)-5,6,7,8-tetrahydrofolate-binding site is contributed by Ser-361–Phe-363.

The protein belongs to the SHMT family. In terms of assembly, homodimer. Pyridoxal 5'-phosphate serves as cofactor.

Its subcellular location is the cytoplasm. It catalyses the reaction (6R)-5,10-methylene-5,6,7,8-tetrahydrofolate + glycine + H2O = (6S)-5,6,7,8-tetrahydrofolate + L-serine. It functions in the pathway one-carbon metabolism; tetrahydrofolate interconversion. It participates in amino-acid biosynthesis; glycine biosynthesis; glycine from L-serine: step 1/1. In terms of biological role, catalyzes the reversible interconversion of serine and glycine with tetrahydrofolate (THF) serving as the one-carbon carrier. This reaction serves as the major source of one-carbon groups required for the biosynthesis of purines, thymidylate, methionine, and other important biomolecules. Also exhibits THF-independent aldolase activity toward beta-hydroxyamino acids, producing glycine and aldehydes, via a retro-aldol mechanism. The chain is Serine hydroxymethyltransferase from Flavobacterium johnsoniae (strain ATCC 17061 / DSM 2064 / JCM 8514 / BCRC 14874 / CCUG 350202 / NBRC 14942 / NCIMB 11054 / UW101) (Cytophaga johnsonae).